Here is a 192-residue protein sequence, read N- to C-terminus: dCTP deaminase, dUMP-forming (192 aa).

DCTP contacts are provided by residues 101-106 (KSSLGR), Asp119, 127-129 (TLE), Gln148, Tyr162, and Gln174. Glu129 serves as the catalytic Proton donor/acceptor. Residues 165–184 (GAYGNRYQGQRGPTASRSHL) are disordered. Residues 171–183 (YQGQRGPTASRSH) show a composition bias toward polar residues.

This sequence belongs to the dCTP deaminase family. As to quaternary structure, homotrimer.

The enzyme catalyses dCTP + 2 H2O = dUMP + NH4(+) + diphosphate. The protein operates within pyrimidine metabolism; dUMP biosynthesis; dUMP from dCTP: step 1/1. In terms of biological role, bifunctional enzyme that catalyzes both the deamination of dCTP to dUTP and the hydrolysis of dUTP to dUMP without releasing the toxic dUTP intermediate. The chain is dCTP deaminase, dUMP-forming from Kocuria rhizophila (strain ATCC 9341 / DSM 348 / NBRC 103217 / DC2201).